Reading from the N-terminus, the 192-residue chain is Ion-translocating oxidoreductase complex subunit B (192 aa).

The interval 1-26 (MNTIWIAVGALTLLGLVFGAILGYAS) is hydrophobic. Residues 32 to 91 (EDDPVVEKIDAILPQSQCGQCGYPGCRPYAEAVGLQGEKINRCAPGGEAVMLKIAELLNV) form the 4Fe-4S domain. Positions 49, 52, 57, 74, 117, 120, 123, 127, 147, 150, 153, and 157 each coordinate [4Fe-4S] cluster. 2 4Fe-4S ferredoxin-type domains span residues 108-137 (MLAV…GATR) and 138-167 (AMHT…LRPV).

It belongs to the 4Fe4S bacterial-type ferredoxin family. RnfB subfamily. As to quaternary structure, the complex is composed of six subunits: RsxA, RsxB, RsxC, RsxD, RsxE and RsxG. [4Fe-4S] cluster is required as a cofactor.

It is found in the cell inner membrane. Its function is as follows. Part of a membrane-bound complex that couples electron transfer with translocation of ions across the membrane. Required to maintain the reduced state of SoxR. This chain is Ion-translocating oxidoreductase complex subunit B, found in Salmonella dublin (strain CT_02021853).